The following is a 376-amino-acid chain: Serpin B9 (376 aa).

Met-1 carries the N-acetylmethionine modification.

This sequence belongs to the serpin family. Ov-serpin subfamily.

The protein resides in the cytoplasm. In terms of biological role, granzyme B inhibitor. The protein is Serpin B9 (SERPINB9) of Homo sapiens (Human).